The following is a 268-amino-acid chain: Small ribosomal subunit protein eS1 (268 aa).

The interval 1 to 21 (MAVGKNKGLSKGGKKGGKKKV) is disordered.

Belongs to the eukaryotic ribosomal protein eS1 family. As to quaternary structure, component of the small ribosomal subunit. Mature ribosomes consist of a small (40S) and a large (60S) subunit. The 40S subunit contains about 33 different proteins and 1 molecule of RNA (18S). The 60S subunit contains about 49 different proteins and 3 molecules of RNA (28S, 5.8S and 5S).

Its subcellular location is the cytoplasm. Essential for oogenesis; required for late follicle cell development. The chain is Small ribosomal subunit protein eS1 from Drosophila sechellia (Fruit fly).